The chain runs to 311 residues: Ribosomal protein L11 methyltransferase (311 aa).

S-adenosyl-L-methionine contacts are provided by Thr162, Gly183, Asp205, and Asn248.

The protein belongs to the methyltransferase superfamily. PrmA family.

The protein localises to the cytoplasm. It catalyses the reaction L-lysyl-[protein] + 3 S-adenosyl-L-methionine = N(6),N(6),N(6)-trimethyl-L-lysyl-[protein] + 3 S-adenosyl-L-homocysteine + 3 H(+). Functionally, methylates ribosomal protein L11. The sequence is that of Ribosomal protein L11 methyltransferase from Bacillus velezensis (strain DSM 23117 / BGSC 10A6 / LMG 26770 / FZB42) (Bacillus amyloliquefaciens subsp. plantarum).